A 414-amino-acid chain; its full sequence is Probable peptidoglycan glycosyltransferase FtsW (414 aa).

The Cytoplasmic segment spans residues 1-12; that stretch reads MRLSLPRLKMPR. A helical transmembrane segment spans residues 13–33; sequence LPGFSILVWISTALKGWVMGS. Residues 34–47 lie on the Periplasmic side of the membrane; it reads REKDTDSLIMYDRT. Residues 48 to 68 form a helical membrane-spanning segment; the sequence is LLWLTFGLAAIGFIMVTSASM. Over 69–86 the chain is Cytoplasmic; it reads PIGQRLTNDPFFFAKRDG. A helical membrane pass occupies residues 87–107; it reads VYLILAFILAIITLRLPMEFW. Residues 108–111 are Periplasmic-facing; sequence QRYS. Residues 112 to 132 traverse the membrane as a helical segment; it reads ATMLLGSIILLMIVLVVGSSV. The Cytoplasmic portion of the chain corresponds to 133 to 174; it reads KGASRWIDLGLLRIQPAELTKLSLFCYIANYLVRKGDEVRNN. Residues 175–194 form a helical membrane-spanning segment; that stretch reads LRGFLKPMGVILVLAVLLLA. The Periplasmic segment spans residues 195-197; sequence QPD. Residues 198–217 traverse the membrane as a helical segment; it reads LGTVVVLFVTTLAMLFLAGA. Residue K218 is a topological domain, cytoplasmic. Residues 219–239 form a helical membrane-spanning segment; sequence LWQFIAIIGMGISAVVLLILA. At 240-301 the chain is on the periplasmic side; it reads EPYRIRRVTA…PEAHTDFIFA (62 aa). Residues 302–322 traverse the membrane as a helical segment; it reads IIGEELGYVGVVLALLMVFFV. Residues 323 to 342 are Cytoplasmic-facing; the sequence is AFRAMSIGRKALEIDHRFSG. The helical transmembrane segment at 343 to 363 threads the bilayer; that stretch reads FLACSIGIWFSFQALVNVGAA. Topologically, residues 364–373 are periplasmic; the sequence is AGMLPTKGLT. The helical transmembrane segment at 374–394 threads the bilayer; the sequence is LPLISYGGSSLLIMSTAIMML. At 395 to 414 the chain is on the cytoplasmic side; the sequence is LRIDYETRLEKAQAFVRGSR.

The protein belongs to the SEDS family. FtsW subfamily.

The protein localises to the cell inner membrane. It catalyses the reaction [GlcNAc-(1-&gt;4)-Mur2Ac(oyl-L-Ala-gamma-D-Glu-L-Lys-D-Ala-D-Ala)](n)-di-trans,octa-cis-undecaprenyl diphosphate + beta-D-GlcNAc-(1-&gt;4)-Mur2Ac(oyl-L-Ala-gamma-D-Glu-L-Lys-D-Ala-D-Ala)-di-trans,octa-cis-undecaprenyl diphosphate = [GlcNAc-(1-&gt;4)-Mur2Ac(oyl-L-Ala-gamma-D-Glu-L-Lys-D-Ala-D-Ala)](n+1)-di-trans,octa-cis-undecaprenyl diphosphate + di-trans,octa-cis-undecaprenyl diphosphate + H(+). It participates in cell wall biogenesis; peptidoglycan biosynthesis. In terms of biological role, peptidoglycan polymerase that is essential for cell division. The chain is Probable peptidoglycan glycosyltransferase FtsW from Escherichia coli O157:H7.